The primary structure comprises 348 residues: Fasciculation and elongation protein zeta-2 (348 aa).

Residues 11–40 form a disordered region; sequence YEFQEPAGSVQEQENCNASPEAGAGAHAGG. Phosphoserine occurs at positions 130, 171, and 190. The stretch at 206–280 forms a coiled coil; sequence ERVKRLSVSE…TAKKKKKLKS (75 aa). Positions 265–296 are disordered; that stretch reads QKEHKETAKKKKKLKSGSSQNGRSERSHMPGT.

Belongs to the zygin family. Homodimer; disulfide-linked. May form heterodimers with FEZ1. Interacts with synaptotagmin.

Its function is as follows. Involved in axonal outgrowth and fasciculation. This chain is Fasciculation and elongation protein zeta-2 (Fez2), found in Mus musculus (Mouse).